The sequence spans 119 residues: uncharacterized protein (119 aa).

The segment at 64-119 (SAPLGLKEVQKKSNEGLNEVQGAADINKQKRPANSQDSSSVEGDIQNFLEKVTGKN) is disordered. Residues 95–104 (PANSQDSSSV) show a composition bias toward polar residues.

This is an uncharacterized protein from Nostoc sp. (strain PCC 7120 / SAG 25.82 / UTEX 2576).